The following is a 61-amino-acid chain: Large ribosomal subunit protein uL30 (61 aa).

This sequence belongs to the universal ribosomal protein uL30 family. In terms of assembly, part of the 50S ribosomal subunit.

The chain is Large ribosomal subunit protein uL30 from Corynebacterium aurimucosum (strain ATCC 700975 / DSM 44827 / CIP 107346 / CN-1) (Corynebacterium nigricans).